The following is a 230-amino-acid chain: Inactive L-threonine 3-dehydrogenase, mitochondrial (230 aa).

It belongs to the NAD(P)-dependent epimerase/dehydratase family. In terms of tissue distribution, expressed in all tissues examined. Detected in most cell types examined, but not observed in endothelial cells, glioma cell lines and some leukemia cell lines.

Its subcellular location is the mitochondrion. This Homo sapiens (Human) protein is Inactive L-threonine 3-dehydrogenase, mitochondrial.